Here is an 887-residue protein sequence, read N- to C-terminus: Inter-alpha-trypsin inhibitor heavy chain H3 (887 aa).

An N-terminal signal peptide occupies residues 1-21 (MVTLWWPCLVLALLSGLETSG). Residues 22-33 (FPRSPLRLLGKR) constitute a propeptide that is removed on maturation. The region spanning 29 to 158 (LLGKRSLPEG…KVIFELTYEE (130 aa)) is the VIT domain. Asn-91 carries N-linked (GlcNAc...) asparagine glycosylation. One can recognise a VWFA domain in the interval 282-442 (PKNIAFVIDV…YNFLESLALE (161 aa)). Asn-580 is a glycosylation site (N-linked (GlcNAc...) asparagine). Position 647 is an aspartate 1-(chondroitin 4-sulfate)-ester (Asp-647). A propeptide spanning residues 648 to 887 (PHFIIQVPGK…HTDYIVPSLF (240 aa)) is cleaved from the precursor.

This sequence belongs to the ITIH family. In terms of assembly, I-alpha-I plasma protease inhibitors are assembled from one or two heavy chains (HC) and one light chain, bikunin. Pre-alpha-inhibitor (P-alpha-I) is composed of ITIH3/HC3 and bikunin. Post-translationally, heavy chains are linked to bikunin via chondroitin 4-sulfate esterified to the alpha-carboxyl of the C-terminal aspartate after propeptide cleavage.

Its subcellular location is the secreted. Its function is as follows. May act as a carrier of hyaluronan in serum or as a binding protein between hyaluronan and other matrix protein, including those on cell surfaces in tissues to regulate the localization, synthesis and degradation of hyaluronan which are essential to cells undergoing biological processes. The sequence is that of Inter-alpha-trypsin inhibitor heavy chain H3 (Itih3) from Rattus norvegicus (Rat).